Here is a 214-residue protein sequence, read N- to C-terminus: Phosphatidylcholine transfer protein (214 aa).

M1 is subject to N-acetylmethionine. In terms of domain architecture, START spans 1–212 (MAGAACCFSD…MVKACQNYHK (212 aa)). Residues Y72 and R78 each coordinate a 1,2-diacyl-sn-glycero-3-phosphocholine. Phosphoserine is present on S139. Q157 provides a ligand contact to a 1,2-diacyl-sn-glycero-3-phosphocholine.

In terms of assembly, interacts with ACOT13/THEM2. In terms of tissue distribution, abundant in liver of pups but levels in liver decrease 10-fold about 2 weeks after birth. In adult, highly expressed in epididymis, testis, kidney and bone-marrow derived mast cells.

The protein resides in the cytoplasm. In terms of biological role, catalyzes the transfer of phosphatidylcholine between membranes. Binds a single lipid molecule. This chain is Phosphatidylcholine transfer protein (Pctp), found in Mus musculus (Mouse).